The chain runs to 169 residues: Probable metallophosphoesterase YsnB (169 aa).

Mn(2+) contacts are provided by Asp8, His10, Asp35, Asn54, His78, His107, and His109.

It belongs to the metallophosphoesterase superfamily. YfcE family. Mn(2+) is required as a cofactor.

The chain is Probable metallophosphoesterase YsnB (ysnB) from Bacillus subtilis (strain 168).